The sequence spans 259 residues: NH(3)-dependent NAD(+) synthetase (259 aa).

33 to 40 is a binding site for ATP; the sequence is GLSGGIDS. Asp-39 serves as a coordination point for Mg(2+). A deamido-NAD(+)-binding site is contributed by Arg-119. Thr-139 contacts ATP. Glu-144 contributes to the Mg(2+) binding site. Residues Lys-152 and Asp-159 each coordinate deamido-NAD(+). Positions 168 and 190 each coordinate ATP. 249–250 is a deamido-NAD(+) binding site; sequence HK.

The protein belongs to the NAD synthetase family. In terms of assembly, homodimer.

It carries out the reaction deamido-NAD(+) + NH4(+) + ATP = AMP + diphosphate + NAD(+) + H(+). The protein operates within cofactor biosynthesis; NAD(+) biosynthesis; NAD(+) from deamido-NAD(+) (ammonia route): step 1/1. Functionally, catalyzes the ATP-dependent amidation of deamido-NAD to form NAD. Uses ammonia as a nitrogen source. This is NH(3)-dependent NAD(+) synthetase from Methanocaldococcus jannaschii (strain ATCC 43067 / DSM 2661 / JAL-1 / JCM 10045 / NBRC 100440) (Methanococcus jannaschii).